The primary structure comprises 566 residues: Urease subunit alpha 2 (566 aa).

In terms of domain architecture, Urease spans 128-566; the sequence is GGVDTHIHFI…LPMAQRYFLF (439 aa). 3 residues coordinate Ni(2+): histidine 133, histidine 135, and lysine 216. An N6-carboxylysine modification is found at lysine 216. Histidine 218 provides a ligand contact to substrate. Residues histidine 245 and histidine 271 each contribute to the Ni(2+) site. Histidine 319 serves as the catalytic Proton donor. A Ni(2+)-binding site is contributed by aspartate 359.

This sequence belongs to the metallo-dependent hydrolases superfamily. Urease alpha subunit family. In terms of assembly, may form a heterohexamer of 3 UreC (alpha) and 3 UreAB (gamma/beta) subunits. May also form a heterotrimer of UreA (gamma), UreB (beta) and UreC (alpha) subunits. Three heterotrimers associate to form the active enzyme. The cofactor is Ni cation. In terms of processing, carboxylation allows a single lysine to coordinate two nickel ions.

It localises to the cytoplasm. The catalysed reaction is urea + 2 H2O + H(+) = hydrogencarbonate + 2 NH4(+). It participates in nitrogen metabolism; urea degradation; CO(2) and NH(3) from urea (urease route): step 1/1. This Pseudomonas syringae pv. syringae (strain B728a) protein is Urease subunit alpha 2.